The primary structure comprises 425 residues: AFP homolog 2 (425 aa).

Disordered regions lie at residues 1-207 (MDDD…SGTE) and 288-327 (PFAG…DNSN). Positions 7-17 (LELSLGLSCGG) are necessary and sufficient for the interaction with TOPLESS. Positions 20–34 (GKAKGNNNNNAGSSS) are enriched in low complexity. Basic and acidic residues predominate over residues 37–54 (YRAEGGDRSAKVIDDFKN). Residues 66–81 (PSSGSQRSDSGQQPPQ) are compositionally biased toward low complexity. Residues 124–140 (NDDKKKEKDSSHVDMHE) show a composition bias toward basic and acidic residues. Composition is skewed to polar residues over residues 146–158 (SHVS…GSTA), 185–197 (TDTN…TGQR), and 288–299 (PFAGRVPSNSAT). Residues 322–425 (TGDNSNLNTA…MGMTAASAHT (104 aa)) are necessary and sufficient for the interaction with the JAZ proteins.

Belongs to the Ninja family. Component of a complex at least composed of TOPLESS, TPR2, TPR3, TIFY4B/PPD2, MYC3/ATR2 and TIFY3B/JAZ12. Interacts (via C-terminus) with TIFY10A/JAZ1; TIFY10B/JAZ2; TIFY6B/JAZ3; TIFY6A/JAZ4; TIFY11A/JAZ5; TIFY11B/JAZ6; TIFY7/JAZ9; TIFY9/JAZ10; TIFY3A/JAZ11; TIFY3B/JAZ12; TIFY4A/PPD1; TIFY4B/PPD2 and TIFY8 (via TIFY domain). Interacts with TOPLESS. Interacts with PAT1H1.

The protein resides in the nucleus. In terms of biological role, acts as a transcriptional repressor. Negative regulator of jasmonate responses. Connects the JAZ proteins and the non-JAZ protein TIFY8 with the TOPLESS corepressors. The protein is AFP homolog 2 of Arabidopsis thaliana (Mouse-ear cress).